The chain runs to 92 residues: Small ribosomal subunit protein uS19 (92 aa).

It belongs to the universal ribosomal protein uS19 family.

Its function is as follows. Protein S19 forms a complex with S13 that binds strongly to the 16S ribosomal RNA. The polypeptide is Small ribosomal subunit protein uS19 (Nostoc sp. (strain PCC 7120 / SAG 25.82 / UTEX 2576)).